A 66-amino-acid chain; its full sequence is MAVPKKKTSKSRRNMRRSHLALGKVNVIVDSQTGEYKLPHHVSLVDGTYNNRQVVTKRIETEEAVA.

The protein belongs to the bacterial ribosomal protein bL32 family.

This chain is Large ribosomal subunit protein bL32, found in Rickettsia akari (strain Hartford).